The sequence spans 1158 residues: Phospholipid-transporting ATPase 1 (1158 aa).

Basic and acidic residues predominate over residues 1–15; that stretch reads MDPRKSIDKPPHHDP. The segment at 1–30 is disordered; it reads MDPRKSIDKPPHHDPILGVSSRWSVSSKDN. Topologically, residues 1 to 100 are cytoplasmic; the sequence is MDPRKSIDKP…TAKYSVFTFL (100 aa). The chain crosses the membrane as a helical span at residues 101-122; the sequence is PRNLFEQFHRVAYIYFLVIAVL. The Extracellular segment spans residues 123–127; the sequence is NQLPQ. A helical membrane pass occupies residues 128-150; the sequence is LAVFGRGASIMPLAFVLLVSAIK. The Cytoplasmic portion of the chain corresponds to 151-329; sequence DAYEDFRRHR…SRLETRMNLE (179 aa). A helical transmembrane segment spans residues 330–351; sequence IILLSLFLIVLCTIAAATAAVW. The Extracellular segment spans residues 352–391; sequence LRTHRDDLDTILFYRRKDYSERPGGKNYKYYGWGWEIFFT. Residues 392–409 traverse the membrane as a helical segment; that stretch reads FFMAVIVYQIMIPISLYI. Topologically, residues 410–914 are cytoplasmic; the sequence is SMELVRIGQA…HGHWNYQRMG (505 aa). The active-site 4-aspartylphosphate intermediate is D457. Mg(2+)-binding residues include D859 and D863. Residues 915–934 traverse the membrane as a helical segment; that stretch reads YMILYNFYRNAVFVLILFWY. Topologically, residues 935-948 are extracellular; it reads VLFTCYTLTTAITE. A helical transmembrane segment spans residues 949–968; sequence WSSVLYSVIYTAIPTIIIGI. Topologically, residues 969 to 998 are cytoplasmic; that stretch reads LDKDLGRQTLLDHPQLYGVGQRAEGYSTTL. Residues 999–1020 form a helical membrane-spanning segment; that stretch reads FWYTMIDTIWQSAAIFFIPMFA. The Extracellular portion of the chain corresponds to 1021-1027; the sequence is YWGSTID. Residues 1028 to 1050 traverse the membrane as a helical segment; the sequence is TSSLGDLWTIAAVVVVNLHLAMD. At 1051–1056 the chain is on the cytoplasmic side; it reads VIRWNW. Residues 1057–1077 form a helical membrane-spanning segment; the sequence is ITHAAIWGSIVAACICVIVID. Topologically, residues 1078–1090 are extracellular; sequence VIPTLPGYWAIFQ. A helical transmembrane segment spans residues 1091–1115; sequence VGKTWMFWFCLLAIVVTSLLPRFAI. The Cytoplasmic segment spans residues 1116-1158; the sequence is KFLVEYYRPSDVRIAREAEKLGTFRESQPVGVEMNLIQDPPRR.

It belongs to the cation transport ATPase (P-type) (TC 3.A.3) family. Type IV subfamily. Expressed in roots, flowers, anthers, leaves, vascular tissues and stems.

It is found in the endoplasmic reticulum membrane. The protein localises to the cell membrane. The enzyme catalyses ATP + H2O + phospholipidSide 1 = ADP + phosphate + phospholipidSide 2.. Involved in transport of phospholipids. Contributes to transmembrane flipping of lipids. Has activity with phosphatidylserine and with a much lower efficiency with phosphatidylethanolamine, but not with phosphatidylcholine. This Arabidopsis thaliana (Mouse-ear cress) protein is Phospholipid-transporting ATPase 1.